A 188-amino-acid polypeptide reads, in one-letter code: Elongation factor P (188 aa).

This sequence belongs to the elongation factor P family.

Its subcellular location is the cytoplasm. The protein operates within protein biosynthesis; polypeptide chain elongation. Functionally, involved in peptide bond synthesis. Stimulates efficient translation and peptide-bond synthesis on native or reconstituted 70S ribosomes in vitro. Probably functions indirectly by altering the affinity of the ribosome for aminoacyl-tRNA, thus increasing their reactivity as acceptors for peptidyl transferase. The polypeptide is Elongation factor P (Chlorobium limicola (strain DSM 245 / NBRC 103803 / 6330)).